A 363-amino-acid polypeptide reads, in one-letter code: Probable aminomethyltransferase (363 aa).

It belongs to the GcvT family. In terms of assembly, the glycine cleavage system is composed of four proteins: P, T, L and H.

It catalyses the reaction N(6)-[(R)-S(8)-aminomethyldihydrolipoyl]-L-lysyl-[protein] + (6S)-5,6,7,8-tetrahydrofolate = N(6)-[(R)-dihydrolipoyl]-L-lysyl-[protein] + (6R)-5,10-methylene-5,6,7,8-tetrahydrofolate + NH4(+). Functionally, the glycine cleavage system catalyzes the degradation of glycine. In Halobacterium salinarum (strain ATCC 29341 / DSM 671 / R1), this protein is Probable aminomethyltransferase.